We begin with the raw amino-acid sequence, 319 residues long: Phospho-N-acetylmuramoyl-pentapeptide-transferase (319 aa).

10 consecutive transmembrane segments (helical) span residues 5 to 25 (LIPF…FIGF), 51 to 71 (TMGG…VLIW), 79 to 99 (TWIL…DDGI), 116 to 136 (LGQI…HFAF), 149 to 169 (SFLF…AVNL), 172 to 192 (GLDG…AWIA), 197 to 217 (NWVI…FFIF), 224 to 244 (IFMG…VSIF), 252 to 272 (LLIG…VISF), and 299 to 319 (VDIV…IIWG).

Belongs to the glycosyltransferase 4 family. MraY subfamily. Requires Mg(2+) as cofactor.

It is found in the cell membrane. It carries out the reaction UDP-N-acetyl-alpha-D-muramoyl-L-alanyl-gamma-D-glutamyl-L-lysyl-D-alanyl-D-alanine + di-trans,octa-cis-undecaprenyl phosphate = Mur2Ac(oyl-L-Ala-gamma-D-Glu-L-Lys-D-Ala-D-Ala)-di-trans,octa-cis-undecaprenyl diphosphate + UMP. It functions in the pathway cell wall biogenesis; peptidoglycan biosynthesis. Functionally, catalyzes the initial step of the lipid cycle reactions in the biosynthesis of the cell wall peptidoglycan: transfers peptidoglycan precursor phospho-MurNAc-pentapeptide from UDP-MurNAc-pentapeptide onto the lipid carrier undecaprenyl phosphate, yielding undecaprenyl-pyrophosphoryl-MurNAc-pentapeptide, known as lipid I. The sequence is that of Phospho-N-acetylmuramoyl-pentapeptide-transferase from Lactobacillus gasseri (strain ATCC 33323 / DSM 20243 / BCRC 14619 / CIP 102991 / JCM 1131 / KCTC 3163 / NCIMB 11718 / NCTC 13722 / AM63).